The chain runs to 132 residues: uncharacterized protein (132 aa).

The disordered stretch occupies residues 1-34 (MTAGAGGSPPTRRCPATEDRAPATVATPSSADPT).

To M.tuberculosis Rv2656c.

This is an uncharacterized protein from Mycobacterium tuberculosis (strain CDC 1551 / Oshkosh).